Here is a 337-residue protein sequence, read N- to C-terminus: Glyceraldehyde-3-phosphate dehydrogenase (337 aa).

NAD(+)-binding positions include 12 to 13, Asp34, and Arg79; that span reads RI. D-glyceraldehyde 3-phosphate is bound by residues 150–152, Thr181, 210–211, and Arg233; these read SCT and TG. Cys151 acts as the Nucleophile in catalysis. Asn315 contributes to the NAD(+) binding site.

The protein belongs to the glyceraldehyde-3-phosphate dehydrogenase family. In terms of assembly, homotetramer.

Its subcellular location is the cytoplasm. It carries out the reaction D-glyceraldehyde 3-phosphate + phosphate + NAD(+) = (2R)-3-phospho-glyceroyl phosphate + NADH + H(+). Its pathway is carbohydrate degradation; glycolysis; pyruvate from D-glyceraldehyde 3-phosphate: step 1/5. In Coccidioides immitis (strain RS) (Valley fever fungus), this protein is Glyceraldehyde-3-phosphate dehydrogenase (GPD).